Reading from the N-terminus, the 598-residue chain is Elongation factor 4 (598 aa).

Residues 2–184 (DNVRNFAIIA…AIITKLPAPQ (183 aa)) form the tr-type G domain. GTP is bound by residues 14 to 19 (DHGKST) and 131 to 134 (NKVD).

Belongs to the TRAFAC class translation factor GTPase superfamily. Classic translation factor GTPase family. LepA subfamily.

Its subcellular location is the cell membrane. The enzyme catalyses GTP + H2O = GDP + phosphate + H(+). Required for accurate and efficient protein synthesis under certain stress conditions. May act as a fidelity factor of the translation reaction, by catalyzing a one-codon backward translocation of tRNAs on improperly translocated ribosomes. Back-translocation proceeds from a post-translocation (POST) complex to a pre-translocation (PRE) complex, thus giving elongation factor G a second chance to translocate the tRNAs correctly. Binds to ribosomes in a GTP-dependent manner. The sequence is that of Elongation factor 4 from Wolbachia sp. subsp. Brugia malayi (strain TRS).